The sequence spans 128 residues: Small ribosomal subunit protein uS11 (128 aa).

This sequence belongs to the universal ribosomal protein uS11 family. Part of the 30S ribosomal subunit. Interacts with proteins S7 and S18. Binds to IF-3.

Functionally, located on the platform of the 30S subunit, it bridges several disparate RNA helices of the 16S rRNA. Forms part of the Shine-Dalgarno cleft in the 70S ribosome. The chain is Small ribosomal subunit protein uS11 from Methylococcus capsulatus (strain ATCC 33009 / NCIMB 11132 / Bath).